Here is a 229-residue protein sequence, read N- to C-terminus: Cytochrome c oxidase subunit 2 (229 aa).

The Mitochondrial intermembrane portion of the chain corresponds to 1–26; sequence MATWMNINLQDANSSTMEQLTMFHDH. A helical membrane pass occupies residues 27-48; the sequence is TLMILTMITSIVTFIMVSMTTN. Over 49–62 the chain is Mitochondrial matrix; sequence TLINRYLLEGQTIE. A helical transmembrane segment spans residues 63 to 82; it reads FIWTTIPAITLIFIALPSLH. The Mitochondrial intermembrane portion of the chain corresponds to 83 to 229; it reads LLYLIDEINN…LKWINKSLSS (147 aa). 6 residues coordinate Cu cation: H161, C196, E198, C200, H204, and M207. E198 is a Mg(2+) binding site.

This sequence belongs to the cytochrome c oxidase subunit 2 family. Component of the cytochrome c oxidase (complex IV, CIV), a multisubunit enzyme composed of a catalytic core of 3 subunits and several supernumerary subunits. The complex exists as a monomer or a dimer and forms supercomplexes (SCs) in the inner mitochondrial membrane with ubiquinol-cytochrome c oxidoreductase (cytochrome b-c1 complex, complex III, CIII). Cu cation serves as cofactor.

The protein localises to the mitochondrion inner membrane. The enzyme catalyses 4 Fe(II)-[cytochrome c] + O2 + 8 H(+)(in) = 4 Fe(III)-[cytochrome c] + 2 H2O + 4 H(+)(out). Functionally, component of the cytochrome c oxidase, the last enzyme in the mitochondrial electron transport chain which drives oxidative phosphorylation. The respiratory chain contains 3 multisubunit complexes succinate dehydrogenase (complex II, CII), ubiquinol-cytochrome c oxidoreductase (cytochrome b-c1 complex, complex III, CIII) and cytochrome c oxidase (complex IV, CIV), that cooperate to transfer electrons derived from NADH and succinate to molecular oxygen, creating an electrochemical gradient over the inner membrane that drives transmembrane transport and the ATP synthase. Cytochrome c oxidase is the component of the respiratory chain that catalyzes the reduction of oxygen to water. Electrons originating from reduced cytochrome c in the intermembrane space (IMS) are transferred via the dinuclear copper A center (CU(A)) of subunit 2 and heme A of subunit 1 to the active site in subunit 1, a binuclear center (BNC) formed by heme A3 and copper B (CU(B)). The BNC reduces molecular oxygen to 2 water molecules using 4 electrons from cytochrome c in the IMS and 4 protons from the mitochondrial matrix. The sequence is that of Cytochrome c oxidase subunit 2 (COII) from Oncopeltus fasciatus (Large milkweed bug).